We begin with the raw amino-acid sequence, 481 residues long: RAC-beta serine/threonine-protein kinase (481 aa).

Met-1 bears the N-acetylmethionine mark. The region spanning 5–108 is the PH domain; it reads SVIKEGWLHK…WIRAIQMVAN (104 aa). A Phosphoserine modification is found at Ser-34. Cys-60 and Cys-77 are joined by a disulfide. A Phosphoserine modification is found at Ser-126. 2 O-linked (GlcNAc) serine glycosylation sites follow: Ser-128 and Ser-131. Residues 152 to 409 enclose the Protein kinase domain; it reads FDYLKLLGKG…AKEVMEHRFF (258 aa). ATP-binding positions include 158–166 and Lys-181; that span reads LGKGTFGKV. The Proton acceptor role is filled by Asp-275. Mn(2+)-binding residues include Asn-280 and Asp-293. Residue Thr-306 is glycosylated (O-linked (GlcNAc) threonine). Thr-309 is modified (phosphothreonine; by PDPK1). A glycan (O-linked (GlcNAc) threonine) is linked at Thr-313. In terms of domain architecture, AGC-kinase C-terminal spans 410-481; it reads LSINWQDVVQ…QFSYSASIRE (72 aa). Position 447 is a phosphoserine (Ser-447). Thr-451 bears the Phosphothreonine mark. Ser-461, Ser-474, and Ser-478 each carry phosphoserine. Ser-474 carries O-linked (GlcNAc) serine; alternate glycosylation.

It belongs to the protein kinase superfamily. AGC Ser/Thr protein kinase family. RAC subfamily. As to quaternary structure, interacts with BTBD10. Interacts with KCTD20. Interacts (via PH domain) with MTCP1, TCL1A and TCL1B; this interaction may facilitate AKT2 oligomerization and phosphorylation, hence increasing kinase activity. Interacts with PHB2; this interaction may be important for myogenic differentiation. Interacts (when phosphorylated) with CLIP3; this interaction promotes cell membrane localization. Interacts with WDFY2 (via WD repeats 1-3). Phosphorylation on Thr-309 and Ser-474 is required for full activity. Phosphorylation of the activation loop at Thr-309 by PDPK1/PDK1 is a prerequisite for full activation. Phosphorylated and activated by PDPK1/PDK1 in the presence of phosphatidylinositol 3,4,5-trisphosphate. Phosphorylation by mTORC2 in response to growth factors plays a key role in AKT1 activation: mTORC2 phosphorylates different sites depending on the context, such as Ser-474 or Ser-478, thereby facilitating subsequent phosphorylation of the activation loop by PDPK1/PDK1. In terms of processing, ubiquitinated; undergoes both 'Lys-48'- and 'Lys-63'-linked polyubiquitination. TRAF6-induced 'Lys-63'-linked AKT2 ubiquitination. When fully phosphorylated and translocated into the nucleus, undergoes 'Lys-48'-polyubiquitination catalyzed by TTC3, leading to its degradation by the proteasome. Post-translationally, O-GlcNAcylation at Thr-306 and Thr-313 inhibits activating phosphorylation at Thr-309 via disrupting the interaction between AKT and PDPK1/PDK1. In terms of tissue distribution, expressed in adipocytes and hepatocytes (at protein level). Expressed at low levels in skeletal muscle (at protein level).

Its subcellular location is the cytoplasm. The protein resides in the nucleus. The protein localises to the cell membrane. It localises to the early endosome. The catalysed reaction is L-seryl-[protein] + ATP = O-phospho-L-seryl-[protein] + ADP + H(+). It catalyses the reaction L-threonyl-[protein] + ATP = O-phospho-L-threonyl-[protein] + ADP + H(+). Phosphorylation at Thr-309 (in the kinase domain) and Ser-474 (in the C-terminal regulatory region) is required for full activation. In adipocytes and hepatocytes, the activation is induced by insulin. AKT2 phosphorylation of PKP1 is induced by insulin. Functionally, serine/threonine kinase closely related to AKT1 and AKT3. All 3 enzymes, AKT1, AKT2 and AKT3, are collectively known as AKT kinase. AKT regulates many processes including metabolism, proliferation, cell survival, growth and angiogenesis, through the phosphorylation of a range of downstream substrates. Over 100 substrates have been reported so far, although for most of them, the precise AKT kinase catalyzing the reaction was not specified. AKT regulates glucose uptake by mediating insulin-induced translocation of the SLC2A4/GLUT4 glucose transporter to the cell surface. Phosphorylation of PTPN1 at 'Ser-50' negatively modulates its phosphatase activity preventing dephosphorylation of the insulin receptor and the attenuation of insulin signaling. Phosphorylation of TBC1D4 triggers the binding of this effector to inhibitory 14-3-3 proteins, which is required for insulin-stimulated glucose transport. AKT also regulates the storage of glucose in the form of glycogen by phosphorylating GSK3A at 'Ser-21' and GSK3B at 'Ser-9', resulting in inhibition of its kinase activity. Phosphorylation of GSK3 isoforms by AKT is also thought to be one mechanism by which cell proliferation is driven. AKT also regulates cell survival via the phosphorylation of MAP3K5 (apoptosis signal-related kinase). Phosphorylation of 'Ser-83' decreases MAP3K5 kinase activity stimulated by oxidative stress and thereby prevents apoptosis. AKT mediates insulin-stimulated protein synthesis by phosphorylating TSC2 at 'Ser-939' and 'Thr-1462', thereby activating mTORC1 signaling and leading to both phosphorylation of 4E-BP1 and in activation of RPS6KB1. AKT is involved in the phosphorylation of members of the FOXO factors (Forkhead family of transcription factors), leading to binding of 14-3-3 proteins and cytoplasmic localization. In particular, FOXO1 is phosphorylated at 'Thr-24', 'Ser-256' and 'Ser-319'. FOXO3 and FOXO4 are phosphorylated on equivalent sites. AKT has an important role in the regulation of NF-kappa-B-dependent gene transcription and positively regulates the activity of CREB1 (cyclic AMP (cAMP)-response element binding protein). The phosphorylation of CREB1 induces the binding of accessory proteins that are necessary for the transcription of pro-survival genes such as BCL2 and MCL1. AKT phosphorylates 'Ser-454' on ATP citrate lyase (ACLY), thereby potentially regulating ACLY activity and fatty acid synthesis. Activates the 3B isoform of cyclic nucleotide phosphodiesterase (PDE3B) via phosphorylation of 'Ser-273', resulting in reduced cyclic AMP levels and inhibition of lipolysis. Phosphorylates PIKFYVE on 'Ser-318', which results in increased PI(3)P-5 activity. The Rho GTPase-activating protein DLC1 is another substrate and its phosphorylation is implicated in the regulation cell proliferation and cell growth. AKT plays a role as key modulator of the AKT-mTOR signaling pathway controlling the tempo of the process of newborn neurons integration during adult neurogenesis, including correct neuron positioning, dendritic development and synapse formation. Signals downstream of phosphatidylinositol 3-kinase (PI(3)K) to mediate the effects of various growth factors such as platelet-derived growth factor (PDGF), epidermal growth factor (EGF), insulin and insulin-like growth factor 1 (IGF1). AKT mediates the antiapoptotic effects of IGF1. Essential for the SPATA13-mediated regulation of cell migration and adhesion assembly and disassembly. May be involved in the regulation of the placental development. In response to lysophosphatidic acid stimulation, inhibits the ciliogenesis cascade. In this context, phosphorylates WDR44, hence stabilizing its interaction with Rab11 and preventing the formation of the ciliogenic Rab11-FIP3-RAB3IP complex. Also phosphorylates RAB3IP/Rabin8, thus may affect RAB3IP guanine nucleotide exchange factor (GEF) activity toward Rab8, which is important for cilia growth. Phosphorylates PKP1, facilitating its interaction with YWHAG and translocation to the nucleus, ultimately resulting in a reduction in keratinocyte intercellular adhesion. Phosphorylation of PKP1 increases PKP1 protein stability, translocation to the cytoplasm away from desmosome plaques and PKP1-driven cap-dependent translation. Its function is as follows. Several AKT2-specific substrates have been identified, including ANKRD2, C2CD5, CLK2 and PITX2. May play a role in myoblast differentiation. In this context, may act through PITX2 phosphorylation. Unphosphorylated PITX2 associates with an ELAVL1/HuR-containing complex, which stabilizes cyclin mRNA and ensuring cell proliferation. Phosphorylation by AKT2 impairs this association, leading to CCND1 mRNA destabilization and progression towards differentiation. Also involved in the negative regulation of myogenesis in response to stress conditions. In this context, acts by phosphorylating ANKRD2. May also be a key regulator of glucose uptake. Regulates insulin-stimulated glucose transport by the increase of glucose transporter GLUT4 translocation from intracellular stores to the plasma membrane. In this context, acts by phosphorylating C2CD5/CDP138 on 'Ser-197' in insulin-stimulated adipocytes. Through the phosphorylation of CLK2 on 'Thr-343', involved in insulin-regulated suppression of hepatic gluconeogenesis. The polypeptide is RAC-beta serine/threonine-protein kinase (Rattus norvegicus (Rat)).